Reading from the N-terminus, the 321-residue chain is MKSFFLTLFRQQAALTKKLSRVVITLVIVLCAIVAIFRVWAFYTESPWTRDAKFTADVVAIAPDVSGLLTDVRVTDNQLVNKGDVLFVIDQPRYHQAVAQAEADVAYYQALVTEKRRESGRRARLGVSAMSQENIDQSNNALETATHQLAKAQAVMSLAKLELDRTVVRAPADGWVTNLHVQSGEFIERGNTAVALVKKDSFYLLAYMEETKLEGVRRGYRAEITPLGSEKIFYGTVDSVAAGINNSSNSANTKGLANVDSNLEWVRLAQRVPVKIRLDRQMGDLYPAGTTATVVVTGEQVNNDKKPSPLIRLLYRLREFG.

The chain crosses the membrane as a helical span at residues 22 to 42; that stretch reads VVITLVIVLCAIVAIFRVWAF.

Belongs to the membrane fusion protein (MFP) (TC 8.A.1) family.

The protein localises to the cell inner membrane. Its function is as follows. Forms an efflux pump with AaeB. In Pectobacterium atrosepticum (strain SCRI 1043 / ATCC BAA-672) (Erwinia carotovora subsp. atroseptica), this protein is p-hydroxybenzoic acid efflux pump subunit AaeA.